A 53-amino-acid polypeptide reads, in one-letter code: Snake venom serine protease LmrSP-4 (53 aa).

A disulfide bond links C26 and C42. Residue H41 is the Charge relay system of the active site.

In terms of assembly, monomer. N-glycosylated. In terms of tissue distribution, expressed by the venom gland.

The protein resides in the secreted. Its activity is regulated as follows. Inhibited by the small molecule serine protease inhibitors phenylmethylsulfonyl fluoride (PMSF) and benzamidine. In terms of biological role, snake venom serine protease that has fibrinogenolytic activity. Hydrolyzes the alpha-chain of fibrinogen (FGA), without affecting the beta- and the gamma-chains. Also displays hydrolytic activity towards S-2302 (plasma kallikrein substrate) and S-2251 (substrate for plasmin), but has no hydrolytic activity with S-2238 (thrombin substrate) or S-2222 (factor Xa). This is Snake venom serine protease LmrSP-4 from Lachesis muta rhombeata (Bushmaster).